The chain runs to 1839 residues: MSSPTDAERVNMRREKHPQIEETFEEHVHNAMPKFKKHYALGITTHTNDEDDDPRDHRQRGIHNPNFIHSPNDPRPPLSQPIKPRFSVHGTASNASVFSHGDIAPVRKTSRAGSLFKRLAGKKSTTSLLGTEHQQRQQQQSSNSLVPAAGLRRKMSTFIHGGSGSQSNESRGTRSSIFFPSTSNSRRGSATSTMTSGSRSSHPPDTPPITSQQQEQQYDQQRQQRPETREQEQKPPTLSDMPIVSRSPSFFMLDTDLNNLSDITNIISATPKNTESDEVRSTGANKTLKYPKPPLSSHKSTSASDLSHHKAQWTAPESWDIEEDANKLLATKRKAKHHHHYHHPQHPRPPHRKHYSNFSKPIEDKAVVEKEQEPPEKCPQPISTDSNDAQGLEIAKPIDESSGIQHSASTQSVSSFSSGATGASGATGKQIGGDQETESTISTVGEDEEVTNLRSIDSEQTDDTSFSKFDEEYDKAEYQLEKYYNDFSDVDLNRRYAIRIFNIDDTFTTLSCTPNTTLQDMMPQLKRKFNVGQGSYQVSLKVGKLSKILRPTAKPILIQRRLLLLNGYLKSDPLHIMGIEDLSFIFSFVFHPVATSHLNYEQEQRLSRGDFVHVDLRNMDLTTPPIILYQHTSDIESLDVSNNANIFLPLDFIESAIKLSSLRMVNIRASKFPANVTDAYKLVSLDLERNFIKKVPDSIFKLNNLTIVNLQCNNLERLPPGFSKLKNLQLLDISSNKFVNYPEVINSCTNLLQIDLSYNKIHSLPVSINQLVKLAKMNLFNNRLTSVGDLSQMKNLRTLNLRCNRVTSIECHAPNLQNLFLTDNRISTFDDDLTRLRTLELQQNPITSMVCGGNYMANMTSLSLNKAKLSSFSAELLSKLPRLEKLELNENNLTQLPPEINKLTRLIYLSVARNKLESIPDEISDLRSLKSLDLHSNNLRMLMNNLEDLELTSLNVSSNLLTGFHGSPAKFFASPSPKLAKSLLFLSVADNNLTDSIWPLVNTFQNLKTLNLSYNNFVEISDLKLQNLTELYLSGNNFTSLPGEAVQHLRSLKVLMLNGNKLLSLPAELSQLSRLSVLDVGSNQLKYNISNYHYDWNWRNNKDLKYLNFSGNKRFEIKSALDPEGKNDLSDLGILKQLRVLGLMDVTLKTSKVPDESVSIRLRTTASMINGMRYGVADTLGQSDSVCSRDVTFERFRGREDECLICLYDGKNENASSGHKISKIIRDIYDKILIRLLEKYGEESDGIKRALRYSFLQLNKEINGMLVSVEDGNTDSGLTSADLLSGSSATVVYLKGKKIYTANIGDTMAVLSKNNGDFVTLTKLHVPAEREEYERIRTSGGYVNNQKLDGVSEVSRAVGFFDLLPHIHASPDISETVLSYSDEMLIIATHKLWEYLDYETVCDISRENKSQPMSAAEKMKDYAISYGCSDNITILCVSLDKSVNQQSQFTLNREDLISRKNTFEDTVLRRLQPEIAPPTGNVAIVFTDIKNSTFLWELFPDAMRAAIKTHNDIMRRQLRIYGGYEVKTEGDAFMVAFPTPTSALVWCLSVQLKLLEAEWPEEITSIQDGCLITDNSGTKVYLGLSVRMGVHWGCPVPEIDLVTQRMDYLGPVVNKAARVSGVADGGQITLSSDFCSEFKKIMKFHKRVVENQEPLKEVYGEDFIGEVLEREIHMLENVGWVFKDLGEQKLKGLETKEFITIAYPKTLASRHDLATKNQNSSVLNDDLLFQLRTISNKLENILSSINGGLIESETPGNSSIYMTFDKNTKDAVITKSTESDWISFLDHLVTRVESTVAILQLRQKLQGGLELYTSSDSTMHKSVFELLDEILKIQTDQKQ.

Disordered stretches follow at residues 1–21 (MSSP…PQIE), 43–87 (ITTH…PRFS), 126–245 (TSLL…PIVS), 272–315 (KNTE…QWTA), 332–388 (KRKA…DSND), and 400–468 (ESSG…SFSK). The span at 165-211 (SQSNESRGTRSSIFFPSTSNSRRGSATSTMTSGSRSSHPPDTPPITS) shows a compositional bias: polar residues. Low complexity predominate over residues 212-221 (QQQEQQYDQQ). A compositionally biased stretch (basic and acidic residues) spans 222–233 (RQQRPETREQEQ). Basic residues predominate over residues 332–355 (KRKAKHHHHYHHPQHPRPPHRKHY). Positions 361–376 (PIEDKAVVEKEQEPPE) are enriched in basic and acidic residues. Low complexity predominate over residues 407 to 428 (SASTQSVSSFSSGATGASGATG). A Ras-associating domain is found at 494 to 574 (RRYAIRIFNI…LNGYLKSDPL (81 aa)). LRR repeat units follow at residues 632 to 655 (TSDI…FIES), 659 to 679 (LSSL…VTDA), 681 to 702 (KLVS…IFKL), 704 to 726 (NLTI…SKLK), 727 to 748 (NLQL…INSC), 750 to 771 (NLLQ…INQL), 773 to 794 (KLAK…SQMK), 795 to 816 (NLRT…APNL), 817 to 834 (QNLF…DDLT), 835 to 856 (RLRT…GNYM), 858 to 879 (NMTS…LLSK), 882 to 903 (RLEK…INKL), 905 to 926 (RLIY…ISDL), 928 to 950 (SLKS…EDLE), 951 to 971 (LTSL…PAKF), 982 to 1004 (SLLF…VNTF), 1006 to 1027 (NLKT…KLQN), 1028 to 1048 (LTEL…AVQH), 1051 to 1073 (SLKV…SQLS), 1074 to 1096 (RLSV…HYDW), 1103 to 1124 (DLKY…LDPE), and 1135 to 1160 (LKQL…SVSI). The PPM-type phosphatase domain occupies 1173–1439 (RYGVADTLGQ…DNITILCVSL (267 aa)). Residues 1483–1620 (AIVFTDIKNS…PVVNKAARVS (138 aa)) enclose the Guanylate cyclase domain. Residues Asp1488 and Asp1531 each contribute to the Mg(2+) site.

The protein belongs to the adenylyl cyclase class-3 family. It depends on Mg(2+) as a cofactor.

The enzyme catalyses ATP = 3',5'-cyclic AMP + diphosphate. Its function is as follows. Plays essential roles in regulation of cellular metabolism by catalyzing the synthesis of a second messenger, cAMP. The protein is Adenylate cyclase (CYR1) of Lachancea kluyveri (Yeast).